The primary structure comprises 321 residues: Small ribosomal subunit biogenesis GTPase RsgA (321 aa).

Residues 89–248 (QSWINRPPVA…VADTPGFNRP (160 aa)) form the CP-type G domain. Residues 138 to 141 (TKRD) and 190 to 198 (GPSGVGKTS) contribute to the GTP site. Zn(2+)-binding residues include Cys-273, Cys-278, His-280, and Cys-286.

Belongs to the TRAFAC class YlqF/YawG GTPase family. RsgA subfamily. In terms of assembly, monomer. Associates with 30S ribosomal subunit, binds 16S rRNA. Zn(2+) is required as a cofactor.

Its subcellular location is the cytoplasm. One of several proteins that assist in the late maturation steps of the functional core of the 30S ribosomal subunit. Helps release RbfA from mature subunits. May play a role in the assembly of ribosomal proteins into the subunit. Circularly permuted GTPase that catalyzes slow GTP hydrolysis, GTPase activity is stimulated by the 30S ribosomal subunit. In Prochlorococcus marinus (strain MIT 9303), this protein is Small ribosomal subunit biogenesis GTPase RsgA.